The following is a 382-amino-acid chain: Lysophosphatidylserine lipase ABHD12 (382 aa).

The span at M1–S12 shows a compositional bias: basic and acidic residues. The interval M1–M45 is disordered. Over M1–R60 the chain is Cytoplasmic. The span at S13–L25 shows a compositional bias: polar residues. The helical transmembrane segment at I61 to S81 threads the bilayer. The Extracellular portion of the chain corresponds to I82 to G382. N109 carries an N-linked (GlcNAc...) asparagine glycan. Residue S232 is the Nucleophile of the active site. Residues D319 and H358 each act as charge relay system in the active site.

The protein belongs to the serine esterase family. As to expression, ubiquitously expressed in adult tissues.

The protein resides in the endoplasmic reticulum membrane. The catalysed reaction is 1-(9Z-octadecenoyl)-sn-glycero-3-phospho-L-serine + H2O = sn-glycero-3-phospho-L-serine + (9Z)-octadecenoate + H(+). It carries out the reaction 1-(9Z-octadecenoyl)-sn-glycero-3-phospho-(1'-sn-glycerol) + H2O = sn-glycero-3-phospho-(1'-sn-glycerol) + (9Z)-octadecenoate + H(+). It catalyses the reaction 1-(9Z-octadecenoyl)-sn-glycero-3-phospho-(1D-myo-inositol) + H2O = sn-glycero-3-phospho-1D-myo-inositol + (9Z)-octadecenoate + H(+). The enzyme catalyses 1-(9Z-octadecenoyl)-sn-glycero-3-phosphoethanolamine + H2O = sn-glycero-3-phosphoethanolamine + (9Z)-octadecenoate + H(+). The catalysed reaction is 1-(9Z-octadecenoyl)-sn-glycero-3-phosphocholine + H2O = 1-(9Z-octadecenoyl)-sn-glycerol + phosphocholine + H(+). It carries out the reaction 2-(9Z-octadecenoyl)-glycerol + H2O = glycerol + (9Z)-octadecenoate + H(+). It catalyses the reaction 1-hexadecanoyl-sn-glycero-3-phospho-L-serine + H2O = sn-glycero-3-phospho-L-serine + hexadecanoate + H(+). The enzyme catalyses 2-(5Z,8Z,11Z,14Z-eicosatetraenoyl)-glycerol + H2O = glycerol + (5Z,8Z,11Z,14Z)-eicosatetraenoate + H(+). The catalysed reaction is Hydrolyzes glycerol monoesters of long-chain fatty acids.. It carries out the reaction 1-decanoylglycerol + H2O = decanoate + glycerol + H(+). It catalyses the reaction 1-dodecanoylglycerol + H2O = dodecanoate + glycerol + H(+). The enzyme catalyses 1-tetradecanoylglycerol + H2O = tetradecanoate + glycerol + H(+). The catalysed reaction is 2-hexadecanoylglycerol + H2O = glycerol + hexadecanoate + H(+). It carries out the reaction 1-(9Z-octadecenoyl)-glycerol + H2O = glycerol + (9Z)-octadecenoate + H(+). It catalyses the reaction 2-(9Z,12Z-octadecadienoyl)-glycerol + H2O = (9Z,12Z)-octadecadienoate + glycerol + H(+). The enzyme catalyses 1-(5Z,8Z,11Z,14Z-eicosatetraenoyl)-glycerol + H2O = glycerol + (5Z,8Z,11Z,14Z)-eicosatetraenoate + H(+). The catalysed reaction is 1-(9Z,12Z-octadecadienoyl)-glycerol + H2O = (9Z,12Z)-octadecadienoate + glycerol + H(+). It carries out the reaction 1-hexadecanoylglycerol + H2O = glycerol + hexadecanoate + H(+). It catalyses the reaction 1-octadecanoylglycerol + H2O = octadecanoate + glycerol + H(+). The enzyme catalyses 1-octadecanoyl-2-(9,10-epoxyoctadecanoyl)-sn-glycero-3-phospho-L-serine + H2O = 9,10-epoxyoctadecanoate + 1-octadecanoyl-sn-glycero-3-phosphoserine + H(+). The catalysed reaction is 1-octadecanoyl-2-(10-hydroxyoctadecanoyl)-sn-glycero-3-phospho-L-serine + H2O = 1-octadecanoyl-sn-glycero-3-phosphoserine + 10-hydroxyoctadecanoate + H(+). It carries out the reaction 1-hexadecanoyl-2-(10-hydroxyoctadecanoyl)-sn-glycero-3-phospho-L-serine + H2O = 10-hydroxyoctadecanoate + 1-hexadecanoyl-sn-glycero-3-phospho-L-serine + H(+). Lysophosphatidylserine (LPS) lipase that mediates the hydrolysis of lysophosphatidylserine, a class of signaling lipids that regulates immunological and neurological processes. Represents a major lysophosphatidylserine lipase in the brain, thereby playing a key role in the central nervous system. Also able to hydrolyze oxidized phosphatidylserine; oxidized phosphatidylserine is produced in response to severe inflammatory stress and constitutes a proapoptotic 'eat me' signal. Also has monoacylglycerol (MAG) lipase activity: hydrolyzes 2-arachidonoylglycerol (2-AG), thereby acting as a regulator of endocannabinoid signaling pathways. Has a strong preference for very-long-chain lipid substrates; substrate specificity is likely due to improved catalysis and not improved substrate binding. In Danio rerio (Zebrafish), this protein is Lysophosphatidylserine lipase ABHD12.